The chain runs to 268 residues: Phosphatidylglycerol--prolipoprotein diacylglyceryl transferase (268 aa).

4 helical membrane-spanning segments follow: residues 14 to 34, 57 to 77, 90 to 110, and 117 to 137; these read LGPI…FAGW, LTFY…IIFY, FFLW…LIAF, and IGAN…IGLG. A 1,2-diacyl-sn-glycero-3-phospho-(1'-sn-glycerol) is bound at residue Arg-140. A run of 3 helical transmembrane segments spans residues 174 to 194, 200 to 220, and 240 to 260; these read QLFE…LVTI, YLVL…CEFF, and ILSI…FIKI.

Belongs to the Lgt family.

The protein resides in the cell inner membrane. The enzyme catalyses L-cysteinyl-[prolipoprotein] + a 1,2-diacyl-sn-glycero-3-phospho-(1'-sn-glycerol) = an S-1,2-diacyl-sn-glyceryl-L-cysteinyl-[prolipoprotein] + sn-glycerol 1-phosphate + H(+). Its pathway is protein modification; lipoprotein biosynthesis (diacylglyceryl transfer). In terms of biological role, catalyzes the transfer of the diacylglyceryl group from phosphatidylglycerol to the sulfhydryl group of the N-terminal cysteine of a prolipoprotein, the first step in the formation of mature lipoproteins. This Francisella tularensis subsp. tularensis (strain FSC 198) protein is Phosphatidylglycerol--prolipoprotein diacylglyceryl transferase.